Consider the following 129-residue polypeptide: uncharacterized protein (129 aa).

Residues 77–97 (ILAVFIISFIIVVVGVLLLGL) traverse the membrane as a helical segment. The tract at residues 109–129 (SSNDKKLQSNDEEKQALAEKA) is disordered. The span at 111-129 (NDKKLQSNDEEKQALAEKA) shows a compositional bias: basic and acidic residues.

The protein resides in the vacuole membrane. This is an uncharacterized protein from Saccharomyces cerevisiae (strain ATCC 204508 / S288c) (Baker's yeast).